The chain runs to 269 residues: Regulatory protein RecX (269 aa).

This sequence belongs to the RecX family.

Its subcellular location is the cytoplasm. In terms of biological role, modulates RecA activity. This Listeria monocytogenes serotype 4b (strain CLIP80459) protein is Regulatory protein RecX.